The sequence spans 570 residues: Cytoplasmic polyadenylation element-binding protein 2 (570 aa).

One can recognise an RRM domain in the interval 434–516; it reads LVAFIGGVPR…KRVEIKPYFF (83 aa).

Expressed specifically in the spermatogenic germ line.

In terms of biological role, cytoplasmic polyadenylation element binding protein that binds to and regulates the translation of specific mRNAs. Not required for oogenesis. The chain is Cytoplasmic polyadenylation element-binding protein 2 (cpb-2) from Caenorhabditis elegans.